The following is a 106-amino-acid chain: Probable glutaredoxin (106 aa).

The region spanning 8–106 (IVQKITGADP…AKYLDVQFTQ (99 aa)) is the Glutaredoxin domain. A disulfide bridge connects residues Cys28 and Cys31.

It belongs to the glutaredoxin family.

It localises to the virion. The chain is Probable glutaredoxin from Acanthamoeba polyphaga mimivirus (APMV).